A 314-amino-acid chain; its full sequence is Homoserine O-acetyltransferase (314 aa).

Cysteine 142 functions as the Acyl-thioester intermediate in the catalytic mechanism. Lysine 163 and serine 192 together coordinate substrate. Histidine 235 (proton acceptor) is an active-site residue. Residue glutamate 237 is part of the active site. Arginine 249 is a substrate binding site.

The protein belongs to the MetA family.

It localises to the cytoplasm. It carries out the reaction L-homoserine + acetyl-CoA = O-acetyl-L-homoserine + CoA. The protein operates within amino-acid biosynthesis; L-methionine biosynthesis via de novo pathway; O-acetyl-L-homoserine from L-homoserine: step 1/1. Its function is as follows. Transfers an acetyl group from acetyl-CoA to L-homoserine, forming acetyl-L-homoserine. This is Homoserine O-acetyltransferase from Streptococcus mutans serotype c (strain ATCC 700610 / UA159).